The sequence spans 114 residues: Putative pterin-4-alpha-carbinolamine dehydratase (114 aa).

It belongs to the pterin-4-alpha-carbinolamine dehydratase family.

It carries out the reaction (4aS,6R)-4a-hydroxy-L-erythro-5,6,7,8-tetrahydrobiopterin = (6R)-L-erythro-6,7-dihydrobiopterin + H2O. The chain is Putative pterin-4-alpha-carbinolamine dehydratase from Methylococcus capsulatus (strain ATCC 33009 / NCIMB 11132 / Bath).